The chain runs to 551 residues: RCC1 and BTB domain-containing protein 2 (551 aa).

RCC1 repeat units lie at residues 64-115, 117-169, 171-222, 223-274, 276-326, and 328-382; these read NDEI…VLAT, EGEV…VLTS, GEVF…AVVD, TGEV…VLTD, GQVY…AAKT, and GGHV…TVAE. A BTB domain is found at 394–457; that stretch reads ADLKFLVDGK…LYTDSISLSP (64 aa).

The protein resides in the cytoplasmic vesicle. It localises to the secretory vesicle. The protein localises to the acrosome. This is RCC1 and BTB domain-containing protein 2 (RCBTB2) from Homo sapiens (Human).